The following is an 85-amino-acid chain: MKAVFAILFLAFIALTYAKSYDEVKEEIKNEVEREIFEDLEEESDELDNDVEEFNDAKPWRRWRRIRWRKIVPYIPAIVKAAGKK.

A signal peptide spans 1–18 (MKAVFAILFLAFIALTYA). Positions 19–57 (KSYDEVKEEIKNEVEREIFEDLEEESDELDNDVEEFNDA) are excised as a propeptide. The residue at position 82 (Ala-82) is an Alanine amide.

The protein belongs to the arminin family. As to expression, expressed in entodermal epithelium along the body column.

The protein localises to the secreted. Its subcellular location is the target cell membrane. Its function is as follows. Antimicrobial peptide with a broad-spectrum antimicrobial activity. Keeps its antibacterial activity under a wide range of salt concentrations that mimic physiological conditions of human blood, which is surprising, since Hydra is an obligate freshwater animal with nearly no salt tolerance. Does not affect red blood cells. This is Arminin 524 from Hydra oligactis (Brown hydra).